The sequence spans 161 residues: Large ribosomal subunit protein mL50 (161 aa).

The interval 27 to 51 is disordered; that stretch reads WGGHSKKEEKEVEENSIIPQEKKEP.

The protein belongs to the mitochondrion-specific ribosomal protein mL50 family. As to quaternary structure, component of the mitochondrial ribosome large subunit (39S) which comprises a 16S rRNA and about 50 distinct proteins.

It localises to the mitochondrion. In Gallus gallus (Chicken), this protein is Large ribosomal subunit protein mL50 (MRPL50).